A 165-amino-acid chain; its full sequence is Peptide deformylase (165 aa).

Cys-93 and His-135 together coordinate Fe cation. Residue Glu-136 is part of the active site. His-139 is a binding site for Fe cation.

The protein belongs to the polypeptide deformylase family. Requires Fe(2+) as cofactor.

It catalyses the reaction N-terminal N-formyl-L-methionyl-[peptide] + H2O = N-terminal L-methionyl-[peptide] + formate. Removes the formyl group from the N-terminal Met of newly synthesized proteins. Requires at least a dipeptide for an efficient rate of reaction. N-terminal L-methionine is a prerequisite for activity but the enzyme has broad specificity at other positions. This chain is Peptide deformylase, found in Thermodesulfovibrio yellowstonii (strain ATCC 51303 / DSM 11347 / YP87).